A 397-amino-acid polypeptide reads, in one-letter code: Riboflavin biosynthesis protein RibBA (397 aa).

Positions 1 to 199 (MFHRIEEALE…IEDLIAYRRH (199 aa)) are DHBP synthase. D-ribulose 5-phosphate-binding positions include 26–27 (RE), Asp-31, 138–142 (RAGHT), and Glu-162. Glu-27 provides a ligand contact to Mg(2+). His-141 contacts Mg(2+). Residues 200–397 (HETLVTREAE…VNKLGHLLNL (198 aa)) form a GTP cyclohydrolase II region. Residue 250-254 (RVHSE) coordinates GTP. Cys-255, Cys-266, and Cys-268 together coordinate Zn(2+). GTP-binding positions include Gln-271, 293 to 295 (EGR), and Thr-315. Asp-327 functions as the Proton acceptor; for GTP cyclohydrolase activity in the catalytic mechanism. Catalysis depends on Arg-329, which acts as the Nucleophile; for GTP cyclohydrolase activity. Residues Thr-350 and Lys-355 each contribute to the GTP site.

This sequence in the N-terminal section; belongs to the DHBP synthase family. The protein in the C-terminal section; belongs to the GTP cyclohydrolase II family. It depends on Mg(2+) as a cofactor. The cofactor is Mn(2+). Zn(2+) is required as a cofactor.

It catalyses the reaction D-ribulose 5-phosphate = (2S)-2-hydroxy-3-oxobutyl phosphate + formate + H(+). It carries out the reaction GTP + 4 H2O = 2,5-diamino-6-hydroxy-4-(5-phosphoribosylamino)-pyrimidine + formate + 2 phosphate + 3 H(+). Its pathway is cofactor biosynthesis; riboflavin biosynthesis; 2-hydroxy-3-oxobutyl phosphate from D-ribulose 5-phosphate: step 1/1. It participates in cofactor biosynthesis; riboflavin biosynthesis; 5-amino-6-(D-ribitylamino)uracil from GTP: step 1/4. Catalyzes the conversion of D-ribulose 5-phosphate to formate and 3,4-dihydroxy-2-butanone 4-phosphate. Its function is as follows. Catalyzes the conversion of GTP to 2,5-diamino-6-ribosylamino-4(3H)-pyrimidinone 5'-phosphate (DARP), formate and pyrophosphate. The protein is Riboflavin biosynthesis protein RibBA of Bacillus cereus (strain ATCC 14579 / DSM 31 / CCUG 7414 / JCM 2152 / NBRC 15305 / NCIMB 9373 / NCTC 2599 / NRRL B-3711).